Consider the following 324-residue polypeptide: Non-homologous end joining protein Ku 1 (324 aa).

Positions 10 to 193 (INFGLVTIPV…AKPSDKEIQM (184 aa)) constitute a Ku domain. The interval 256-324 (QARRGRGGQV…SGGRRRRRAS (69 aa)) is disordered. The segment covering 281 to 292 (AELDKKAKELGI) has biased composition (basic and acidic residues).

The protein belongs to the prokaryotic Ku family. Homodimer. Interacts with LigD.

In terms of biological role, with LigD forms a non-homologous end joining (NHEJ) DNA repair enzyme, which repairs dsDNA breaks with reduced fidelity. Binds linear dsDNA with 5'- and 3'- overhangs but not closed circular dsDNA nor ssDNA. Recruits and stimulates the ligase activity of LigD. In Saccharopolyspora erythraea (strain ATCC 11635 / DSM 40517 / JCM 4748 / NBRC 13426 / NCIMB 8594 / NRRL 2338), this protein is Non-homologous end joining protein Ku 1.